A 250-amino-acid chain; its full sequence is Triosephosphate isomerase (250 aa).

9 to 11 (NWK) serves as a coordination point for substrate. His94 functions as the Electrophile in the catalytic mechanism. Glu165 functions as the Proton acceptor in the catalytic mechanism. Residues Gly171, Ser211, and 232–233 (GG) contribute to the substrate site.

Belongs to the triosephosphate isomerase family. In terms of assembly, homodimer.

The protein localises to the cytoplasm. It carries out the reaction D-glyceraldehyde 3-phosphate = dihydroxyacetone phosphate. It functions in the pathway carbohydrate biosynthesis; gluconeogenesis. The protein operates within carbohydrate degradation; glycolysis; D-glyceraldehyde 3-phosphate from glycerone phosphate: step 1/1. In terms of biological role, involved in the gluconeogenesis. Catalyzes stereospecifically the conversion of dihydroxyacetone phosphate (DHAP) to D-glyceraldehyde-3-phosphate (G3P). This Alkalilimnicola ehrlichii (strain ATCC BAA-1101 / DSM 17681 / MLHE-1) protein is Triosephosphate isomerase.